The chain runs to 446 residues: Mycosin-1 (446 aa).

The N-terminal stretch at 1–21 (MHRIFLITVALALLTASPASA) is a signal peptide. The disordered stretch occupies residues 24 to 43 (PPPIDPGALPPDVTGPDQPT). The 324-residue stretch at 64–387 (PWSNTYLGVA…AGVIDAVAAL (324 aa)) folds into the Peptidase S8 domain. Catalysis depends on charge relay system residues Asp90, His121, and Ser332. The chain crosses the membrane as a helical span at residues 419 to 439 (ITAVALVAVGLTLALGLGALA).

It belongs to the peptidase S8 family.

It is found in the cell membrane. In terms of biological role, may play a dual role in regulation of ESX-1 secretion and virulence. Acts as a protease that cleaves EspB. Essential for ESX-1 function, required for early replication in macrophages and full virulence in mice. This chain is Mycosin-1, found in Mycobacterium tuberculosis (strain ATCC 25618 / H37Rv).